The following is a 291-amino-acid chain: Pentonolactonase XacC (291 aa).

The a divalent metal cation site is built by Glu15, Asn141, and Asp191. Asp191 (proton donor/acceptor) is an active-site residue.

The protein belongs to the SMP-30/CGR1 family. As to quaternary structure, monomer. The cofactor is a divalent metal cation.

The catalysed reaction is L-arabinono-1,4-lactone + H2O = L-arabinonate + H(+). It catalyses the reaction D-xylono-1,4-lactone + H2O = D-xylonate + H(+). Its pathway is carbohydrate degradation. Its function is as follows. Pentonolactonase involved in D-arabinose and D-xylose catabolism. Catalyzes the hydrolysis of both L-arabino-gamma-lactone and D-xylono-gamma-lactone to the corresponding acids. Can also hydrolyze D-galactono-gamma-lactone and D-glucono-delta-lactone. The sequence is that of Pentonolactonase XacC from Haloferax volcanii (strain ATCC 29605 / DSM 3757 / JCM 8879 / NBRC 14742 / NCIMB 2012 / VKM B-1768 / DS2) (Halobacterium volcanii).